The sequence spans 569 residues: Tetratricopeptide repeat protein 22 (569 aa).

7 TPR repeats span residues 66-99, 101-133, 203-237, 260-294, 295-328, 383-418, and 432-465; these read PAVRHLLGAFAFYLEELDEARECFLEVAHEHPGN, NAWANLAHVYGRLGQEEEEEACAARLADLMGLA, ATLYIRLDGIFLELGSEEQKRLPAFNRTLALLRQV, KDTFSTTPMGVHDCGYSGTDPLDCFGKAIEIAKNQ, PPILNRLAKIFYFLGKQDMAIGTCNMALDVLRDP, FKAYLDIGQVYYYMGVDAVQELLAVDEAALNQALVF, and PELQLLRGKCLRIKGEDANAAACFKRAVELDDAG.

The polypeptide is Tetratricopeptide repeat protein 22 (TTC22) (Homo sapiens (Human)).